A 333-amino-acid chain; its full sequence is DNA primase small subunit PriS (333 aa).

Catalysis depends on residues D96, D98, and D237.

Belongs to the eukaryotic-type primase small subunit family. Heterodimer of a small subunit (PriS) and a large subunit (PriL). Mg(2+) serves as cofactor. Mn(2+) is required as a cofactor.

In terms of biological role, catalytic subunit of DNA primase, an RNA polymerase that catalyzes the synthesis of short RNA molecules used as primers for DNA polymerase during DNA replication. The small subunit contains the primase catalytic core and has DNA synthesis activity on its own. Binding to the large subunit stabilizes and modulates the activity, increasing the rate of DNA synthesis while decreasing the length of the DNA fragments, and conferring RNA synthesis capability. The DNA polymerase activity may enable DNA primase to also catalyze primer extension after primer synthesis. May also play a role in DNA repair. The chain is DNA primase small subunit PriS from Thermoplasma volcanium (strain ATCC 51530 / DSM 4299 / JCM 9571 / NBRC 15438 / GSS1).